Reading from the N-terminus, the 371-residue chain is MSEMSLIMLAAGNSTRFNTKVKKQFLRLGNDPLWLYATKNLSSFYPFKKIVVTSSNITYMKKFTKNYEFIEGGDTRAESLKKALELIDSEFVMVSDVARVLVSKNLFDRLIENLDKADCITPALKVADTTLFDNEALQREKIKLIQTPQISKTKLLKKALDQNLEFTDDSTAIAAMGGKIWFVEGEENARKLTFKEDLKKLDLPTPSFEIFTGNGFDVHEFGENRPLLLAGVQIHPTMGLKAHSDGDVLAHSLTDAILGAAGLGDIGELYPDTDMKFKNANSMELLKQAYDKVREIGFELINIDICVMAQSPKLKDFKQAMQSNIAHTLDLDEFRINVKATTTEKLGFIGRKEGMAVLSSVNLKYFDWTRL.

A 2-C-methyl-D-erythritol 4-phosphate cytidylyltransferase region spans residues 1 to 210 (MSEMSLIMLA…LDLPTPSFEI (210 aa)). The tract at residues 211-371 (FTGNGFDVHE…NLKYFDWTRL (161 aa)) is 2-C-methyl-D-erythritol 2,4-cyclodiphosphate synthase. Asp217 and His219 together coordinate a divalent metal cation. 4-CDP-2-C-methyl-D-erythritol 2-phosphate-binding positions include 217–219 (DVH) and 243–244 (HS). Position 251 (His251) interacts with a divalent metal cation. 4-CDP-2-C-methyl-D-erythritol 2-phosphate contacts are provided by residues 265–267 (DIG), 270–274 (YPDTD), 309–315 (AQSPKLK), 341–344 (TTTE), Phe348, and Arg351.

In the N-terminal section; belongs to the IspD/TarI cytidylyltransferase family. IspD subfamily. The protein in the C-terminal section; belongs to the IspF family. The cofactor is a divalent metal cation.

It carries out the reaction 2-C-methyl-D-erythritol 4-phosphate + CTP + H(+) = 4-CDP-2-C-methyl-D-erythritol + diphosphate. The enzyme catalyses 4-CDP-2-C-methyl-D-erythritol 2-phosphate = 2-C-methyl-D-erythritol 2,4-cyclic diphosphate + CMP. Its pathway is isoprenoid biosynthesis; isopentenyl diphosphate biosynthesis via DXP pathway; isopentenyl diphosphate from 1-deoxy-D-xylulose 5-phosphate: step 2/6. It functions in the pathway isoprenoid biosynthesis; isopentenyl diphosphate biosynthesis via DXP pathway; isopentenyl diphosphate from 1-deoxy-D-xylulose 5-phosphate: step 4/6. Bifunctional enzyme that catalyzes the formation of 4-diphosphocytidyl-2-C-methyl-D-erythritol from CTP and 2-C-methyl-D-erythritol 4-phosphate (MEP) (IspD), and catalyzes the conversion of 4-diphosphocytidyl-2-C-methyl-D-erythritol 2-phosphate (CDP-ME2P) to 2-C-methyl-D-erythritol 2,4-cyclodiphosphate (ME-CPP) with a corresponding release of cytidine 5-monophosphate (CMP) (IspF). This is Bifunctional enzyme IspD/IspF from Campylobacter jejuni subsp. jejuni serotype O:2 (strain ATCC 700819 / NCTC 11168).